Reading from the N-terminus, the 410-residue chain is Putative formamidase C869.04 (410 aa).

The protein belongs to the acetamidase/formamidase family. In terms of assembly, homotrimer.

The protein resides in the cytoplasm. The protein localises to the nucleus. The enzyme catalyses formamide + H2O = formate + NH4(+). In terms of biological role, hydrolyzes formamide with the production of ammonia which can be used as a source of nitrogen for growth. May also act on acetamide, propanamide and butanamide. In Schizosaccharomyces pombe (strain 972 / ATCC 24843) (Fission yeast), this protein is Putative formamidase C869.04.